The following is a 23-amino-acid chain: SVLEIGLMLQEETEKNPKTSYSI.

Residues 1-23 are disordered; sequence SVLEIGLMLQEETEKNPKTSYSI.

Contains 7 disulfide bonds. Expressed by the venom gland.

Its subcellular location is the secreted. This is Basic phospholipase A2 homolog Vur-S49 analog from Vipera renardi (Steppe viper).